Reading from the N-terminus, the 601-residue chain is MCGIVGYIGYDNAKELLLKGLEKLEYRGYDSAGIAVVNDDNTTVFKEKGRIAELRKVADSSDFDGPVGIGHTRWATHGVPNHENSHPHQSSNGRFTLVHNGVIENYEELKGEYLQGVSFISETDTEVIVQLVEYFSNQGLSTEEAFTKVVSLLHGSYALGLLDAEDKDTIYVAKNKSPLLLGVGEGFNVIASDALAMLQVTSEYKEIHDHEIVIVKKDEVIIKDADGNVVERDSYIAEIDASDAEKGVYAHYMLKEIHEQPAVMRRIIQEYQDAEGNLKIDQDIINDVKEADRIYVIAAGTSYHAGLVGKEFLEKWAGVPTEVHVASEFVYNMPLLSEKPLFVYISQSGETADSRAVLVETNKLGHKSLTITNVAGSTLSREADHTLLLHAGPEIAVASTKAYTAQIAVLSILSQIVAKEHGREADIDLLRELAKVTTAIEAIVDDAPIMEQIATDFLETTRNAFFIGRTIDYNVSLEGALKLKEISYIQAEGFAGGELKHGTIALIEEGTPVVGLATQEKVNLSIRGNVKEVVARGAHPCIISMEGLEKEGDTYVIPHVHELLTPLVSVVALQLISYYAALHRDLDVDKPRNLAKSVTVE.

Cys2 functions as the Nucleophile; for GATase activity in the catalytic mechanism. The region spanning 2–218 (CGIVGYIGYD…DHEIVIVKKD (217 aa)) is the Glutamine amidotransferase type-2 domain. SIS domains lie at 284 to 423 (IIND…EHGR) and 453 to 591 (IATD…VDKP). Residue Lys596 is the For Fru-6P isomerization activity of the active site.

In terms of assembly, homodimer.

It localises to the cytoplasm. The catalysed reaction is D-fructose 6-phosphate + L-glutamine = D-glucosamine 6-phosphate + L-glutamate. Catalyzes the first step in hexosamine metabolism, converting fructose-6P into glucosamine-6P using glutamine as a nitrogen source. The protein is Glutamine--fructose-6-phosphate aminotransferase [isomerizing] of Staphylococcus aureus (strain COL).